A 98-amino-acid polypeptide reads, in one-letter code: NADH-ubiquinone oxidoreductase chain 4L (98 aa).

Helical transmembrane passes span 1–21 (MSLT…GLLL), 29–49 (SLLC…MIIL), and 61–81 (IILL…LVMV).

It belongs to the complex I subunit 4L family. Core subunit of respiratory chain NADH dehydrogenase (Complex I) which is composed of 45 different subunits.

The protein localises to the mitochondrion inner membrane. The catalysed reaction is a ubiquinone + NADH + 5 H(+)(in) = a ubiquinol + NAD(+) + 4 H(+)(out). Its function is as follows. Core subunit of the mitochondrial membrane respiratory chain NADH dehydrogenase (Complex I) which catalyzes electron transfer from NADH through the respiratory chain, using ubiquinone as an electron acceptor. Part of the enzyme membrane arm which is embedded in the lipid bilayer and involved in proton translocation. The sequence is that of NADH-ubiquinone oxidoreductase chain 4L (MT-ND4L) from Platyrrhinus brachycephalus (Short-headed broad-nosed bat).